Reading from the N-terminus, the 284-residue chain is Pantothenate synthetase (284 aa).

Position 31 to 38 (31 to 38 (MGNLHAGH)) interacts with ATP. The Proton donor role is filled by H38. Q62 lines the (R)-pantoate pocket. Q62 serves as a coordination point for beta-alanine. 150-153 (GKKD) provides a ligand contact to ATP. Residue Q156 participates in (R)-pantoate binding. ATP contacts are provided by residues V179 and 187–190 (MSSR).

Belongs to the pantothenate synthetase family. As to quaternary structure, homodimer.

The protein localises to the cytoplasm. It carries out the reaction (R)-pantoate + beta-alanine + ATP = (R)-pantothenate + AMP + diphosphate + H(+). Its pathway is cofactor biosynthesis; (R)-pantothenate biosynthesis; (R)-pantothenate from (R)-pantoate and beta-alanine: step 1/1. Catalyzes the condensation of pantoate with beta-alanine in an ATP-dependent reaction via a pantoyl-adenylate intermediate. This Xanthomonas campestris pv. campestris (strain 8004) protein is Pantothenate synthetase.